The following is a 353-amino-acid chain: Nuclear hormone receptor family member nhr-27 (353 aa).

Residues 24–102 (VSNCVVCGRL…KGMLDLSRYT (79 aa)) constitute a DNA-binding region (nuclear receptor). 2 NR C4-type zinc fingers span residues 27 to 47 (CVVC…CSAC) and 64 to 85 (CKYS…CKFC). The 233-residue stretch at 119 to 351 (ETLFLTMTVS…SQVHQDVIEF (233 aa)) folds into the NR LBD domain. The segment at 340-351 (QPSQVHQDVIEF) is AF-2.

It belongs to the nuclear hormone receptor family.

It localises to the nucleus. Ligand-activated transcription factor. Involved in lifespan extension in a manner dependent upon mitochondrial function. The chain is Nuclear hormone receptor family member nhr-27 from Caenorhabditis elegans.